The chain runs to 639 residues: 3-oxocholoyl-CoA 4-desaturase (639 aa).

Glutamine 101 is a binding site for FMN. 155–158 is a binding site for substrate; sequence HAAH. Tyrosine 160 (proton donor) is an active-site residue. FMN-binding positions include arginine 208, arginine 286, and 308-309; that span reads GR. [4Fe-4S] cluster is bound by residues cysteine 332 and cysteine 335. Glutamine 337 contributes to the FAD binding site. [4Fe-4S] cluster-binding residues include cysteine 339 and cysteine 353. FAD-binding residues include alanine 383, glutamate 402, glutamine 410, lysine 420, and valine 447.

It in the N-terminal section; belongs to the NADH:flavin oxidoreductase/NADH oxidase family. It depends on FMN as a cofactor. FAD is required as a cofactor. The cofactor is [4Fe-4S] cluster.

The enzyme catalyses 7alpha,12alpha-dihydroxy-3-oxochol-24-oyl-CoA + NAD(+) = 7alpha,12alpha-dihydroxy-3-oxochol-4-en-24-oyl-CoA + NADH + H(+). The catalysed reaction is 7alpha-hydroxy-3-oxochol-24-oyl-CoA + NAD(+) = 7alpha-hydroxy-3-oxochol-4-en-24-oyl-CoA + NADH + H(+). The protein operates within lipid metabolism; bile acid degradation. Stereo-specific NAD(H)-dependent 3-oxo-delta4-cholenoic acid oxidoreductase involved in bile acid 7alpha-dehydroxylation. The polypeptide is 3-oxocholoyl-CoA 4-desaturase (Clostridium scindens (strain JCM 10418 / VPI 12708)).